A 539-amino-acid polypeptide reads, in one-letter code: uncharacterized protein (539 aa).

Catalysis depends on Ser216, which acts as the Acyl-ester intermediate.

It belongs to the type-B carboxylesterase/lipase family.

The protein resides in the cytoplasm. It localises to the nucleus. This is an uncharacterized protein from Schizosaccharomyces pombe (strain 972 / ATCC 24843) (Fission yeast).